Consider the following 155-residue polypeptide: DNA polymerase epsilon subunit 4 (155 aa).

2 stretches are compositionally biased toward acidic residues: residues 1–16 (MASEELFEAEFSEEQD) and 24–48 (ETEEAELAETEEPLEITEESPDNPE). The segment at 1–76 (MASEELFEAE…APADNEAKMT (76 aa)) is disordered. The segment covering 49 to 65 (AESTTEQLTEKPVTNGN) has biased composition (polar residues).

Component of the DNA polymerase epsilon complex consisting of four subunits: the catalytic subunit PolE1/DNApol-epsilon255 and the accessory subunits PolE2/DNApol-epsilon58, Chrac-14/DNApolE3 and PolE4/Mes4.

The protein resides in the nucleus. Functionally, accessory component of the DNA polymerase epsilon complex. Participates in DNA repair and in chromosomal DNA replication. Has a role in cell cycle progression. Required for wing morphogenesis. This chain is DNA polymerase epsilon subunit 4, found in Drosophila melanogaster (Fruit fly).